The primary structure comprises 59 residues: Early growth response protein 1 (59 aa).

3 C2H2-type zinc fingers span residues 1–18 (CDRR…IRIH), 24–46 (FQCR…IRTH), and 52–59 (FACDICGR).

Belongs to the EGR C2H2-type zinc-finger protein family.

Its subcellular location is the nucleus. The protein localises to the cytoplasm. Transcriptional regulator. Recognizes and binds to the DNA sequence 5'-GCG(T/G)GGGCG-3'(EGR-site) in the promoter region of target genes. Binds double-stranded target DNA, irrespective of the cytosine methylation status. Regulates the transcription of numerous target genes, and thereby plays an important role in regulating the response to growth factors, DNA damage, and ischemia. Plays a role in the regulation of cell survival, proliferation and cell death. Mediates responses to ischemia and hypoxia; regulates the expression of proteins that are involved in inflammatory processes. Plays a role in regulating the expression of circadian clock genes. In Serinus canaria (Island canary), this protein is Early growth response protein 1 (EGR1).